The chain runs to 380 residues: MNPSRRSPLTWAVHLSVLLLVLLWTLPTAGLLISSLRDKDQLAVSGWWTALSSSSRNAVVRAPSAEDQVERDGKFVISGNLLEGRGEVSAFGFSSREPTKFKPGETAELNDGERLTVQSDGSFEIVSDQRMEGSRGQRIFFTATTPPRFTLDNYAEVLSAAGIGRSFLNSLTVAVPSTVIPILIAAFAAYALAWMPFPGRAVLLAVVVGLLVVPLQMSLIPLLQLYNGVGAFFGVSAKTYMGIWLAHTGFGLPLAIYLLRNYMAGLPREIMESARVDGASDFDIFVKIILPLSFPALASFAIFQFLWTWNDLLVAIVFLGAGDDKLVLTGRLVNLLGSRGGNWEILTASAFITIVVPLIVFFALQRYLVRGLLAGSVKGG.

6 helical membrane passes run 13–33 (VHLS…GLLI), 179–199 (VIPI…PFPG), 202–222 (VLLA…LIPL), 239–259 (TYMG…IYLL), 288–308 (IILP…FLWT), and 344–364 (EILT…FFAL). Residues 167-364 (FLNSLTVAVP…VVPLIVFFAL (198 aa)) form the ABC transmembrane type-1 domain.

This sequence belongs to the binding-protein-dependent transport system permease family. MalFG subfamily.

It is found in the cell inner membrane. In terms of biological role, part of the binding-protein-dependent transport system for alpha-glucosides such as sucrose, maltose and trehalose. Probably responsible for the translocation of the substrate across the membrane. This Rhizobium meliloti (strain 1021) (Ensifer meliloti) protein is Alpha-glucoside transport system permease protein AglG (aglG).